Reading from the N-terminus, the 470-residue chain is Aminoacyl transferase sphA (470 aa).

Serine 212, histidine 244, and threonine 272 together coordinate pyridoxal 5'-phosphate. Lysine 275 bears the N6-(pyridoxal phosphate)lysine mark.

Belongs to the class-II pyridoxal-phosphate-dependent aminotransferase family. BioF subfamily. In terms of assembly, homodimer. Pyridoxal 5'-phosphate is required as a cofactor.

It functions in the pathway secondary metabolite biosynthesis. Aminoacyl transferase; part of the gene cluster that mediates the biosynthesis of sphingofungins, bioactive molecules acting as sphingolipid inhibitors via inhibiting serine palmitoyl transferase (SPT). Within the pathway, sphA transfers 2-methyl-aminomalonate and 2-hydroxymethyl-aminomalonate onto the sphB product 3-hydroxyoctadeca-4,10-dienoyl-ACP to produce the precursors of sphingofungins E and F. The substrate specificity of sphA using 2-methyl-aminomalonate and 2-hydroxymethyl-aminomalonate instread of aminomalonate is responsible for the biosynthesis of sphingofungins E and F but not B and C like in Aspergillus fumigatus. The PKS sphB does not contain any putative thioesterase domain for releasing the nascent polyketide chain and it has been suggested that aminoacyl transferases can facilitate the polyketide chain release. This is Aminoacyl transferase sphA from Byssochlamys spectabilis (Paecilomyces variotii).